Reading from the N-terminus, the 278-residue chain is Protein lyl-1 (278 aa).

The segment at 1–46 is disordered; it reads MCPPQARAEVGSAMTEKTEMVCASSPAPAPPSKPASPGPLSTEEVD. Positions 27–37 are enriched in pro residues; sequence APAPPSKPASP. A bHLH domain is found at 149 to 201; it reads ARRVFTNSRERWRQQHVNGAFAELRKLLPTHPPDRKLSKNEVLRLAMKYIGFL. The interval 212-278 is disordered; sequence LTSGPSAPGS…EQTSLSPEVR (67 aa). Positions 269-278 are enriched in polar residues; it reads EQTSLSPEVR. The residue at position 274 (Ser274) is a Phosphoserine.

As to quaternary structure, efficient DNA binding requires dimerization with another bHLH protein.

It localises to the nucleus. The protein is Protein lyl-1 (Lyl1) of Mus musculus (Mouse).